A 156-amino-acid chain; its full sequence is Arginine repressor (156 aa).

It belongs to the ArgR family.

It localises to the cytoplasm. It functions in the pathway amino-acid biosynthesis; L-arginine biosynthesis [regulation]. In terms of biological role, regulates arginine biosynthesis genes. This chain is Arginine repressor, found in Edwardsiella ictaluri (strain 93-146).